A 440-amino-acid chain; its full sequence is Polycomb group protein VERNALIZATION 2 (440 aa).

The segment at 86–111 (EDCSCPFCSMLCGSFKGLQFHLNSSH) adopts a C2H2-type zinc-finger fold. Residues 156-163 (KPRKRRQR) carry the Nuclear localization signal motif. The tract at residues 267-345 (RQFYHSHRVQ…GHISWACEVF (79 aa)) is VEFS-box. A disordered region spans residues 398–440 (NNNNNSVDHPSDSNTNNNNIVDHPNDIKNKNNVDNKDNNSRDK). Positions 420 to 440 (HPNDIKNKNNVDNKDNNSRDK) are enriched in basic and acidic residues.

The protein belongs to the VEFS (VRN2-EMF2-FIS2-SU(Z)12) family. In terms of assembly, probable component of a PcG complex. In plants, PcG complexes are probably composed of a member of the EZ family (CLF or MEA), FIE, and a member of the VEFS family (FIS2, VRN2 or EMF2). Component of the plant homeodomain / polycomb repressive complex 2 (PHD-PRC2) large complex during prolonged cold, composed of core PRC2 components (VRN2, EZA1, FIE and MSI1), and three related PHD finger proteins (VIL1, VIL2 and VIN3) that mediates histone H3 trimethylation on 'Lys-27' (H3K27me3). Binds to ALP1. As to expression, weakly expressed. Expressed both during, and in the absence of vernalization.

The protein resides in the nucleus. In terms of biological role, polycomb group (PcG) protein. Plays a central role in vernalization by maintaining repressed the homeotic gene FLC, a floral repressor, after a cold treatment. PcG proteins act by forming multiprotein complexes, which are required to maintain the transcriptionally repressive state of homeotic genes throughout development. PcG proteins are not required to initiate repression, but to maintain it during later stages of development. They probably act via the methylation of histones, rendering chromatin heritably changed in its expressibility. Associates constitutively along the whole FLC locus. This Arabidopsis thaliana (Mouse-ear cress) protein is Polycomb group protein VERNALIZATION 2 (VRN2).